The following is a 638-amino-acid chain: Growth hormone receptor (638 aa).

A signal peptide spans 1-18 (MDLWQLLLTLAVAGSGNA). At 19–264 (VSGSEATPAI…SPFACEEDFQ (246 aa)) the chain is on the extracellular side. 2 disulfides stabilise this stretch: Cys-56–Cys-66 and Cys-101–Cys-112. N-linked (GlcNAc...) asparagine glycosylation is present at Asn-115. Cysteines 126 and 140 form a disulfide. The region spanning 151-254 (PPIGLNWTLL…EVLYVALPQM (104 aa)) is the Fibronectin type-III domain. N-linked (GlcNAc...) asparagine glycans are attached at residues Asn-156, Asn-161, and Asn-200. A WSXWS motif motif is present at residues 240-244 (YGEFS). The chain crosses the membrane as a helical span at residues 265–288 (FPWFLIIIFGIFGLTMILFLFIFS). Residues 289–638 (KQQRIKMLIL…STDQLNKIMP (350 aa)) lie on the Cytoplasmic side of the membrane. A required for JAK2 binding region spans residues 294–379 (KMLILPPVPV…HEKSLNILGA (86 aa)). Positions 297 to 305 (ILPPVPVPK) match the Box 1 motif motif. Residues 340-349 (DSWVEFIELD) carry the UbE motif motif. Ser-341 carries the phosphoserine modification. Over residues 429–446 (KNQSNSPSTDTAPNTQQP) the composition is skewed to polar residues. The disordered stretch occupies residues 429 to 448 (KNQSNSPSTDTAPNTQQPGV). Phosphotyrosine occurs at positions 487 and 595.

This sequence belongs to the type I cytokine receptor family. Type 1 subfamily. On growth hormone (GH) binding, forms homodimers and binds JAK2 via a box 1-containing domain. Post-translationally, the soluble form (GHBP) is produced by phorbol ester-promoted proteolytic cleavage at the cell surface (shedding) by ADAM17/TACE. Shedding is inhibited by growth hormone (GH) binding to the receptor probably due to a conformational change in GHR rendering the receptor inaccessible to ADAM17. On GH binding, phosphorylated on tyrosine residues in the cytoplasmic domain by JAK2. In terms of processing, ubiquitinated by the ECS(SOCS2) complex following ligand-binding and phosphorylation by JAK2, leading to its degradation by the proteasome. Regulation by the ECS(SOCS2) complex acts as a negative feedback loop of growth hormone receptor signaling. Ubiquitination is not sufficient for GHR internalization.

Its subcellular location is the cell membrane. The protein resides in the secreted. Its function is as follows. Receptor for pituitary gland growth hormone (GH1) involved in regulating postnatal body growth. On ligand binding, couples to the JAK2/STAT5 pathway. In terms of biological role, the soluble form (GHBP) acts as a reservoir of growth hormone in plasma and may be a modulator/inhibitor of GH signaling. This Ailuropoda melanoleuca (Giant panda) protein is Growth hormone receptor (GHR).